Consider the following 442-residue polypeptide: Glutamyl-tRNA reductase (442 aa).

Residues 49-52 (TCNR), S109, 114-116 (ESQ), and Q120 each bind substrate. The active-site Nucleophile is the C50. 189–194 (GAGAMS) is an NADP(+) binding site.

It belongs to the glutamyl-tRNA reductase family. As to quaternary structure, homodimer.

It carries out the reaction (S)-4-amino-5-oxopentanoate + tRNA(Glu) + NADP(+) = L-glutamyl-tRNA(Glu) + NADPH + H(+). Its pathway is porphyrin-containing compound metabolism; protoporphyrin-IX biosynthesis; 5-aminolevulinate from L-glutamyl-tRNA(Glu): step 1/2. Functionally, catalyzes the NADPH-dependent reduction of glutamyl-tRNA(Glu) to glutamate 1-semialdehyde (GSA). The protein is Glutamyl-tRNA reductase of Kineococcus radiotolerans (strain ATCC BAA-149 / DSM 14245 / SRS30216).